The primary structure comprises 439 residues: AT-hook motif nuclear-localized protein 13 (439 aa).

Disordered stretches follow at residues 1-46, 69-216, and 342-439; these read MDSR…NSYN, QRLP…LGGT, and GRKQ…NSPQ. Composition is skewed to low complexity over residues 9–31 and 79–95; these read QQQQQQQQQQQQQQQQQHLQQQQ and PHQPQQHQYHHPQPQQQ. Residues 109-120 are compositionally biased toward polar residues; that stretch reads SPSSVAATQQHS. A compositionally biased stretch (basic residues) spans 130–139; sequence VKKKRGRPRK. A Bipartite nuclear localization signal motif is present at residues 131–139; sequence KKKRGRPRK. Positions 131–143 form a DNA-binding region, a.T hook 1; it reads KKKRGRPRKYAAD. Composition is skewed to gly residues over residues 143–152 and 171–183; these read DGGGGGGGGS and YGGGNEGGGGGDS. Residues 196 to 208 constitute a DNA-binding region (a.T hook 2); that stretch reads KRNRGRPPGSGKK. The PPC domain occupies 217-359; the sequence is GGVGFTPHVI…GRAQNTPEPA (143 aa). The segment covering 347–357 has biased composition (polar residues); it reads QSAGRAQNTPE. Composition is skewed to low complexity over residues 376–386 and 403–416; these read SPRSQGQQHSS and NNNNSNNHGIFGNS. Over residues 428-439 the composition is skewed to polar residues; it reads MYQNLWPGNSPQ.

It localises to the nucleus. Its function is as follows. Transcription factor that specifically binds AT-rich DNA sequences related to the nuclear matrix attachment regions (MARs). In Arabidopsis thaliana (Mouse-ear cress), this protein is AT-hook motif nuclear-localized protein 13.